The primary structure comprises 819 residues: MDVTIDFSREEWQHLDPAQRSLYRDVVQETYSHLRSVEELQQIGDQKKTYQQIGHKSASDMVFITKTLGAESCHDYSGVRKVIHVNSYIVLPPKRPRHWDPPEDEPKHSSDLQTHDESNGLKRTKRITEYGKISSCINTEHILTGEKLPDHNQCGKVLGYKQIPCQYQKIHTGEKSYECAEFGKIFTQKSQLRVHVTSPTGEKLYVCVECGKACSQTSEFLTHQKTHTREKPYKCGDCGKSFFQVSSLFRHRRIHTGEKLYDCSHCGKGFSYNSDLRIHQKIHTGEKRHGCVDCGKAFTQKSTLRMHQKIHTGERAYVCIECGQAFIQKTHLVAHRRIHTGEKPYACDGCGKAFLSKSQLLVHQRIHSRVRPCVSLDRAKPFSSAPNLLPRKKVQMREKSSICAECGKAFTYRSELIIHQRTHTGEKPYQCGDCGKAFTQKSALTVHRRIHTGEKSYVCVKCGLAFVQRAHLDAHQVIHTGEKPYQCGHCGKFFTSKSQLHVHKRIHTGEKPYVCSNCGKAFANRSNLITHQKTHTGEKAYVCARCGKAFTQRSDLVTHQRIHTGEKPYGCSTCGKAFTQKSHLSIHEKIHTGERQYGCRDCGKAFNQKSILIVHQKIHTGEKPHVCAECGRAFIRKSNFITHQRIHTGEKPYGCTDCGKSFTSKSQLLVHRPIHTGEKPYVCAECGKAFSGRSNLSKHQKTHTGEKPYACSECGKSFRQKSELITHHRIHTGEKPYDCGDCGKSFTKKSQLQVHQRIHTGEKPYRCAECGKAFTDRSNLNKHQTTHTGEKPYKCVVCGKGFVQKSVLSIHENVHTSAV.

Residues 1-75 (MDVTIDFSRE…KTLGAESCHD (75 aa)) form the KRAB domain. The disordered stretch occupies residues 93-123 (PKRPRHWDPPEDEPKHSSDLQTHDESNGLKR). Positions 98–120 (HWDPPEDEPKHSSDLQTHDESNG) are enriched in basic and acidic residues. C2H2-type zinc fingers lie at residues 205 to 227 (YVCV…QKTH), 233 to 255 (YKCG…RRIH), 261 to 283 (YDCS…QKIH), 289 to 311 (HGCV…QKIH), 317 to 339 (YVCI…RRIH), 345 to 367 (YACD…QRIH), 401 to 423 (SICA…QRTH), 429 to 451 (YQCG…RRIH), 457 to 479 (YVCV…QVIH), 485 to 507 (YQCG…KRIH), 513 to 535 (YVCS…QKTH), 541 to 563 (YVCA…QRIH), 569 to 591 (YGCS…EKIH), 597 to 619 (YGCR…QKIH), 625 to 647 (HVCA…QRIH), 653 to 675 (YGCT…RPIH), 681 to 703 (YVCA…QKTH), 709 to 731 (YACS…HRIH), 737 to 759 (YDCG…QRIH), 765 to 787 (YRCA…QTTH), and 793 to 815 (YKCV…ENVH).

The protein belongs to the krueppel C2H2-type zinc-finger protein family.

The protein resides in the nucleus. May be involved in transcriptional regulation. The chain is Zinc finger protein 27 (Zfp27) from Mus musculus (Mouse).